Reading from the N-terminus, the 134-residue chain is Prefoldin subunit 4 (134 aa).

Ala2 is modified (N-acetylalanine). Ser125 carries the phosphoserine modification.

The protein belongs to the prefoldin subunit beta family. As to quaternary structure, heterohexamer of two PFD-alpha type and four PFD-beta type subunits. Interacts with URI1; the interaction is phosphorylation-dependent and occurs in a growth-dependent manner.

The protein resides in the nucleus. It localises to the cytoplasm. The protein localises to the mitochondrion. Binds specifically to cytosolic chaperonin (c-CPN) and transfers target proteins to it. Binds to nascent polypeptide chain and promotes folding in an environment in which there are many competing pathways for nonnative proteins. This Bos taurus (Bovine) protein is Prefoldin subunit 4 (PFDN4).